A 194-amino-acid polypeptide reads, in one-letter code: Protein ORF31 (194 aa).

The first 25 residues, 1 to 25, serve as a signal peptide directing secretion; it reads MKSVASPLCQFHGVFCLYQCRQCLA.

Belongs to the herpesviridae UL92 family. Interacts with ORF34.

It localises to the host nucleus. The protein localises to the host cytoplasm. Plays an important role in the expression of late genes. May play a role in viral replication. The chain is Protein ORF31 (ORF31) from Homo sapiens (Human).